Consider the following 463-residue polypeptide: L-2-hydroxyglutarate dehydrogenase, mitochondrial (463 aa).

Residues 1-52 (MVPALRYLGSVCGRARGIFPGGFSAAHTPASGKSRLLCQGGRRASTSSFDIV) constitute a mitochondrion transit peptide. 2 positions are modified to N6-acetyllysine: Lys104 and Lys173.

It belongs to the L2HGDH family. FAD is required as a cofactor.

Its subcellular location is the mitochondrion. The catalysed reaction is (S)-2-hydroxyglutarate + A = 2-oxoglutarate + AH2. This chain is L-2-hydroxyglutarate dehydrogenase, mitochondrial (L2HGDH), found in Bos taurus (Bovine).